The primary structure comprises 548 residues: Chaperonin GroEL (548 aa).

ATP-binding positions include 30 to 33 (TLGP), Lys51, 87 to 91 (DGTTT), Gly415, 479 to 481 (NAA), and Asp495.

This sequence belongs to the chaperonin (HSP60) family. Forms a cylinder of 14 subunits composed of two heptameric rings stacked back-to-back. Interacts with the co-chaperonin GroES. In terms of processing, UMPylated on a tyrosine residue by YdiU under ATP-limited conditions.

Its subcellular location is the cytoplasm. It carries out the reaction ATP + H2O + a folded polypeptide = ADP + phosphate + an unfolded polypeptide.. UMPylation of the chaperone by YdiU negatively regulates its activity, facilitating Salmonella survival under ATP-limited conditions. Its function is as follows. Together with its co-chaperonin GroES, plays an essential role in assisting protein folding. The GroEL-GroES system forms a nano-cage that allows encapsulation of the non-native substrate proteins and provides a physical environment optimized to promote and accelerate protein folding. The protein is Chaperonin GroEL of Salmonella typhimurium (strain LT2 / SGSC1412 / ATCC 700720).